The sequence spans 366 residues: tRNA(Met) cytidine acetate ligase (366 aa).

ATP is bound by residues 7-20, G101, N145, and R170; that span reads IAEFNPFHNGHQYL.

This sequence belongs to the TmcAL family.

The protein localises to the cytoplasm. It catalyses the reaction cytidine(34) in elongator tRNA(Met) + acetate + ATP = N(4)-acetylcytidine(34) in elongator tRNA(Met) + AMP + diphosphate. Catalyzes the formation of N(4)-acetylcytidine (ac(4)C) at the wobble position of elongator tRNA(Met), using acetate and ATP as substrates. First activates an acetate ion to form acetyladenylate (Ac-AMP) and then transfers the acetyl group to tRNA to form ac(4)C34. The sequence is that of tRNA(Met) cytidine acetate ligase from Pediococcus pentosaceus (strain ATCC 25745 / CCUG 21536 / LMG 10740 / 183-1w).